The chain runs to 170 residues: Group 2 truncated hemoglobin 3-1 (170 aa).

H98 serves as a coordination point for heme b.

The protein belongs to the truncated hemoglobin family. Group II subfamily. In terms of assembly, homodimer when ferric.

In terms of biological role, hemoglobin-like protein that exhibits an unusual concentration-independent binding of O(2) and CO. Required for general plant development and during nodulation. May promote shoot organogenesis from root explants. The polypeptide is Group 2 truncated hemoglobin 3-1 (Medicago truncatula (Barrel medic)).